The sequence spans 250 residues: tRNA (guanine-N(1)-)-methyltransferase (250 aa).

S-adenosyl-L-methionine is bound by residues glycine 116 and 136-141 (IGDYVL).

The protein belongs to the RNA methyltransferase TrmD family. Homodimer.

It localises to the cytoplasm. It carries out the reaction guanosine(37) in tRNA + S-adenosyl-L-methionine = N(1)-methylguanosine(37) in tRNA + S-adenosyl-L-homocysteine + H(+). Functionally, specifically methylates guanosine-37 in various tRNAs. The polypeptide is tRNA (guanine-N(1)-)-methyltransferase (Pseudomonas putida (strain ATCC 700007 / DSM 6899 / JCM 31910 / BCRC 17059 / LMG 24140 / F1)).